The following is a 452-amino-acid chain: Pup--protein ligase (452 aa).

A Mg(2+)-binding site is contributed by E9. R53 provides a ligand contact to ATP. Y55 provides a ligand contact to Mg(2+). D57 acts as the Proton acceptor in catalysis. Position 63 (E63) interacts with Mg(2+). 2 residues coordinate ATP: T66 and W419.

This sequence belongs to the Pup ligase/Pup deamidase family. Pup-conjugating enzyme subfamily.

The catalysed reaction is ATP + [prokaryotic ubiquitin-like protein]-L-glutamate + [protein]-L-lysine = ADP + phosphate + N(6)-([prokaryotic ubiquitin-like protein]-gamma-L-glutamyl)-[protein]-L-lysine.. The protein operates within protein degradation; proteasomal Pup-dependent pathway. Its pathway is protein modification; protein pupylation. Catalyzes the covalent attachment of the prokaryotic ubiquitin-like protein modifier Pup to the proteasomal substrate proteins, thereby targeting them for proteasomal degradation. This tagging system is termed pupylation. The ligation reaction involves the side-chain carboxylate of the C-terminal glutamate of Pup and the side-chain amino group of a substrate lysine. In Mycolicibacterium vanbaalenii (strain DSM 7251 / JCM 13017 / BCRC 16820 / KCTC 9966 / NRRL B-24157 / PYR-1) (Mycobacterium vanbaalenii), this protein is Pup--protein ligase.